The primary structure comprises 210 residues: Redox-sensing transcriptional repressor Rex (210 aa).

The H-T-H motif DNA-binding region spans 17 to 56 (KYHRYLYELLKNDVDRISSKELSEKIGFTASQIRQDLNCF). Position 91-96 (91-96 (GAGNIG)) interacts with NAD(+).

It belongs to the transcriptional regulatory Rex family. In terms of assembly, homodimer.

It is found in the cytoplasm. Functionally, modulates transcription in response to changes in cellular NADH/NAD(+) redox state. The chain is Redox-sensing transcriptional repressor Rex from Clostridium botulinum (strain ATCC 19397 / Type A).